The chain runs to 347 residues: MSRHLNVAIVGATGAVGETFLTVLEERNFPIKSLYPLASSRSVGKTVTFRDQELDVLDLAEFDFSKVDLALFSAGGAVSKEYAPKAVAAGCVVVDNTSCFRYEDDIPLVVPGSESSSNRDYTKRGIIANPNCSTIQMVVALKPIYDAVGISRINVATYQSVSGTGKKAISELVAQVGDLLNGRPANVQVYPQQIAFNALPHIDQFEDNGYTREEMKMVWETRKIMEDDSIMVNPTAVRVPVIYGHSEAVHLELKKPLTADDARALLAKAPGVTVVDNLSKASYPTAIKNAVGHDDVFVGRIRQDISHPCGLNLWIVADNIRKGAATNAVQIAEILQREFLLKLSLPQ.

NADP(+) contacts are provided by residues T13–V16 and R41–S42. R101 serves as a coordination point for phosphate. The Acyl-thioester intermediate role is filled by C132. Q159 serves as a coordination point for substrate. An NADP(+)-binding site is contributed by S162 to G163. Residue K216 participates in phosphate binding. R238 contributes to the substrate binding site. The Proton acceptor role is filled by H245. Residue N319 coordinates NADP(+).

It belongs to the aspartate-semialdehyde dehydrogenase family. Homodimer.

The enzyme catalyses L-aspartate 4-semialdehyde + phosphate + NADP(+) = 4-phospho-L-aspartate + NADPH + H(+). It functions in the pathway amino-acid biosynthesis; L-lysine biosynthesis via DAP pathway; (S)-tetrahydrodipicolinate from L-aspartate: step 2/4. It participates in amino-acid biosynthesis; L-methionine biosynthesis via de novo pathway; L-homoserine from L-aspartate: step 2/3. Its pathway is amino-acid biosynthesis; L-threonine biosynthesis; L-threonine from L-aspartate: step 2/5. Its function is as follows. Catalyzes the NADPH-dependent formation of L-aspartate-semialdehyde (L-ASA) by the reductive dephosphorylation of L-aspartyl-4-phosphate. The chain is Aspartate-semialdehyde dehydrogenase from Legionella pneumophila.